The following is an 89-amino-acid chain: uncharacterized protein (89 aa).

An N-terminal signal peptide occupies residues 1–19 (MQLTKTQFVRCVFLLLANS).

This is an uncharacterized protein from Sulfolobus islandicus filamentous virus (isolate Iceland/Hveragerdi) (SIFV).